Consider the following 290-residue polypeptide: MDFDDHDEGDGDEEMPPMPLSSGYDAPMQPGLGGGGGGVPKPGGGVGGGGGGGGGGGGGGARYRECLKNHAVGIGGHAVDGCGEFMASGEEGSIDALRCAACGCHRNFHRKESESPTGVGPAEPSAVSPAAISAYGASPHHQFSPYYRTPAGYLHHQQHQMAAAAAAAAAAAAGGYPQRPLALPSTSHSGRDEGDDMSGMVGPMVIGPMVGMSLGSAGPSGSGSGKKRFRTKFTQEQKDKMLAFAERLGWRIQKHDEAAVQQFCEEVCVKRHVLKVWMHNNKHTLGKKAP.

The span at 1 to 15 (MDFDDHDEGDGDEEM) shows a compositional bias: acidic residues. Positions 1-59 (MDFDDHDEGDGDEEMPPMPLSSGYDAPMQPGLGGGGGGVPKPGGGVGGGGGGGGGGGGG) are disordered. Residues 31-59 (GLGGGGGGVPKPGGGVGGGGGGGGGGGGG) are compositionally biased toward gly residues. The ZF-HD dimerization-type; degenerate zinc-finger motif lies at 63–112 (YRECLKNHAVGIGGHAVDGCGEFMASGEEGSIDALRCAACGCHRNFHRKE). A DNA-binding region (homeobox) is located at residues 226–289 (KKRFRTKFTQ…NNKHTLGKKA (64 aa)).

In terms of assembly, homo- and heterodimer with other ZFHD proteins.

It is found in the nucleus. In terms of biological role, putative transcription factor. In Oryza sativa subsp. japonica (Rice), this protein is Zinc-finger homeodomain protein 2 (ZHD2).